We begin with the raw amino-acid sequence, 216 residues long: Glutathione S-transferase 1, isoform B (216 aa).

Residues 1-80 (MDFYYLPGSA…YLVEKYGKPC (80 aa)) enclose the GST N-terminal domain. Glutathione-binding positions include serine 9, 50-52 (HCV), and 64-66 (ESR). In terms of domain architecture, GST C-terminal spans 89 to 210 (DPQKRAIVNQ…RSWAEAARPF (122 aa)).

Belongs to the GST superfamily. Theta family. Homodimer.

It catalyses the reaction RX + glutathione = an S-substituted glutathione + a halide anion + H(+). Its function is as follows. Conjugation of reduced glutathione to a wide number of exogenous and endogenous hydrophobic electrophiles. In Anopheles gambiae (African malaria mosquito), this protein is Glutathione S-transferase 1, isoform B.